The chain runs to 347 residues: Uroporphyrinogen decarboxylase (347 aa).

Substrate-binding positions include 36-40, Asp86, Tyr160, Ser212, and His326; that span reads RQAGR.

This sequence belongs to the uroporphyrinogen decarboxylase family. As to quaternary structure, homodimer.

The protein resides in the cytoplasm. It carries out the reaction uroporphyrinogen III + 4 H(+) = coproporphyrinogen III + 4 CO2. It participates in porphyrin-containing compound metabolism; protoporphyrin-IX biosynthesis; coproporphyrinogen-III from 5-aminolevulinate: step 4/4. Functionally, catalyzes the decarboxylation of four acetate groups of uroporphyrinogen-III to yield coproporphyrinogen-III. This chain is Uroporphyrinogen decarboxylase, found in Wolbachia sp. subsp. Brugia malayi (strain TRS).